The sequence spans 97 residues: Co-chaperonin GroES (97 aa).

Belongs to the GroES chaperonin family. Heptamer of 7 subunits arranged in a ring. Interacts with the chaperonin GroEL.

It localises to the cytoplasm. In terms of biological role, together with the chaperonin GroEL, plays an essential role in assisting protein folding. The GroEL-GroES system forms a nano-cage that allows encapsulation of the non-native substrate proteins and provides a physical environment optimized to promote and accelerate protein folding. GroES binds to the apical surface of the GroEL ring, thereby capping the opening of the GroEL channel. The sequence is that of Co-chaperonin GroES from Klebsiella pneumoniae subsp. pneumoniae (strain ATCC 700721 / MGH 78578).